A 358-amino-acid polypeptide reads, in one-letter code: Neuronal-specific septin-3 (358 aa).

Positions 1-10 (MSKGLPEART) are enriched in basic and acidic residues. Residues 1–29 (MSKGLPEARTDTAMSELVPEPRPKPAVPM) are disordered. Positions 58–331 (TGFDFNIMVV…ETYRAKRLND (274 aa)) constitute a Septin-type G domain. The segment at 68–75 (GQSGLGKS) is G1 motif. Position 68 to 75 (68 to 75 (GQSGLGKS)) interacts with GTP. Ser91 bears the Phosphoserine mark. Position 102 (Thr102) interacts with GTP. The G3 motif stretch occupies residues 125–128 (DTPG). The segment at 207–210 (AKAD) is G4 motif. GTP contacts are provided by residues 208 to 216 (KADTMTLEE), Gly265, and Arg280.

It belongs to the TRAFAC class TrmE-Era-EngA-EngB-Septin-like GTPase superfamily. Septin GTPase family. As to quaternary structure, septins polymerize into heterooligomeric protein complexes that form filaments, and can associate with cellular membranes, actin filaments and microtubules. GTPase activity is required for filament formation. Post-translationally, phosphorylated by PKG on serine residues. Phosphorylated by PKG on Ser-91. As to expression, brain-specific, with highest expression in the hippocampal CA3 region (at protein level).

The protein resides in the cytoplasm. It localises to the cytoskeleton. The protein localises to the synapse. Filament-forming cytoskeletal GTPase. May play a role in cytokinesis (Potential). The chain is Neuronal-specific septin-3 from Rattus norvegicus (Rat).